Consider the following 227-residue polypeptide: PKHD-type hydroxylase A1S_0473 (227 aa).

In terms of domain architecture, Fe2OG dioxygenase spans K78–S178. Fe cation contacts are provided by H96, D98, and H159. R169 is a 2-oxoglutarate binding site.

It depends on Fe(2+) as a cofactor. L-ascorbate serves as cofactor.

The polypeptide is PKHD-type hydroxylase A1S_0473 (Acinetobacter baumannii (strain ATCC 17978 / DSM 105126 / CIP 53.77 / LMG 1025 / NCDC KC755 / 5377)).